A 1807-amino-acid chain; its full sequence is Atrochrysone carboxylic acid synthase Agnpks1 (1807 aa).

Positions 41–173 (LFRELHNHSK…ITGAQVIRQA (133 aa)) are N-terminal acylcarrier protein transacylase domain (SAT). Positions 411 to 845 (QSKIAIVGMS…GGNTTILLEE (435 aa)) constitute a Ketosynthase family 3 (KS3) domain. Residues Cys-584, His-720, and His-763 each act as for beta-ketoacyl synthase activity in the active site. Positions 946–1265 (FTFTGQGASY…SLAALHCAGV (320 aa)) are malonyl-CoA:ACP transacylase (MAT) domain. The tract at residues 1334-1653 (TSTVHQIIQE…RILLSRFFSA (320 aa)) is product template (PT) domain. An N-terminal hotdog fold region spans residues 1338–1473 (HQIIQESIDG…ATLIYGDPSE (136 aa)). A PKS/mFAS DH domain is found at 1338-1648 (HQIIQESIDG…FRRYPRILLS (311 aa)). His-1370 acts as the Proton acceptor; for dehydratase activity in catalysis. Positions 1500–1648 (VANRFNHQMA…FRRYPRILLS (149 aa)) are C-terminal hotdog fold. The active-site Proton donor; for dehydratase activity is the Asp-1559. The Carrier domain occupies 1732–1806 (DTTTAKAIQI…DLRSWLEEYY (75 aa)). Ser-1766 bears the O-(pantetheine 4'-phosphoryl)serine mark.

It carries out the reaction holo-[ACP] + 8 malonyl-CoA + 8 H(+) = atrochrysone carboxyl-[ACP] + 8 CO2 + 8 CoA + 2 H2O. The protein operates within secondary metabolite biosynthesis. Its function is as follows. Non-reducing polyketide synthase; part of the gene cluster that mediates the biosynthesis of agnestins, dihydroxy-xanthone metabolites. The pathway begins with the assembly and cyclization of atrochrysone thioester by the non-reducing polyketide synthase Agnpks1. The atrochrysone carboxyl ACP thioesterase AgnL7 then breaks the thioester bond and releases the atrochrysone carboxylic acid as the first enzyme-free intermediate. The decarboxylase AgnL1 then catalyzes the concerted decarboxylation-elimination required to convert atochrysone carboxylic acid into emodin anthrone, which is further oxidized to emodin by the anthrone oxygenase AgnL2. Emodin then undergoes reduction catalyzed by the oxidoreductase AgnL4 to yield the dihydroquinone tautomer which is the substrate for reduction by the short chain dehydrogenase AgnL6 reduction to produce hydroxyketone, followed by AgnL8 dehydration and likely spontaneous autoxidation to chrysophanol. Baeyer-Villiger oxidation by the oxidase AgnL3 leads to monodictyphenone via cleavage of the C-10/C-10a bond of chrysophanol. Alternative cleavage at the C-4a/C-10 bond of chrysophanol also leads to the formation some cephalone F. Further conversion to agnestins A and B, requires reduction to dihydro-monodictyphenone, oxidation to agnestin C probably via an epoxide, and rearrangement to either agnestin A or agnestin B directly, although agnestin A or agnestin B can also interconvert. Within the cluster, AgnR1 is the only unassigned oxidoreductase present which could be involved in this conversion. However, AgnR1 seems not to be involved in this step, and thus genes involved in the proposed oxidation/reduction may be located elsewhere on the genome. Further agnestin A derivatives are probably formed by spontaneous decarboxylations, dehydrations and methanolysis reactions. In Paecilomyces divaricatus (Penicillium divaricatum), this protein is Atrochrysone carboxylic acid synthase Agnpks1.